We begin with the raw amino-acid sequence, 237 residues long: Ribonuclease PH (237 aa).

Residues Arg-86 and 124 to 126 contribute to the phosphate site; that span reads GTR.

The protein belongs to the RNase PH family. In terms of assembly, homohexameric ring arranged as a trimer of dimers.

The catalysed reaction is tRNA(n+1) + phosphate = tRNA(n) + a ribonucleoside 5'-diphosphate. Functionally, phosphorolytic 3'-5' exoribonuclease that plays an important role in tRNA 3'-end maturation. Removes nucleotide residues following the 3'-CCA terminus of tRNAs; can also add nucleotides to the ends of RNA molecules by using nucleoside diphosphates as substrates, but this may not be physiologically important. Probably plays a role in initiation of 16S rRNA degradation (leading to ribosome degradation) during starvation. This is Ribonuclease PH from Rhodopseudomonas palustris (strain HaA2).